Reading from the N-terminus, the 515-residue chain is Nuclear hormone receptor family member nhr-62 (515 aa).

Positions 95–170 form a DNA-binding region, nuclear receptor; the sequence is NLVCVVCGDQ…AGMNPRAVQS (76 aa). 2 NR C4-type zinc fingers span residues 98-118 and 134-153; these read CVVCGDQAFGKHYGVNACNGC and CRFEGRCAIAKEHRNVCRAC. The segment at 169 to 195 is disordered; sequence QSERVEREQNGSPNQIEEDDYKDLSSP. The NR LBD domain occupies 225–509; that stretch reads EMAKLSEQIV…YLCHEVQFIQ (285 aa). The AF-2 stretch occupies residues 498–509; the sequence is SEYLCHEVQFIQ.

It belongs to the nuclear hormone receptor family. As to expression, widely expressed at a low level in many tissues including the pharynx, sensory neurons, intestine, spermatheca, hypodermis, and excretory cell.

It localises to the nucleus. Orphan nuclear hormone receptor. Required for metabolic and physiologic responses associated with dietary-restriction-induced longevity. Modulates triglyceride and lipid metabolism and autophagy, associated with dietary-restriction, probably acting via regulation of transcription of target genes. The polypeptide is Nuclear hormone receptor family member nhr-62 (nhr-62) (Caenorhabditis elegans).